The sequence spans 181 residues: uncharacterized protein (181 aa).

2 stretches are compositionally biased toward gly residues: residues arginine 143–glycine 156 and glycine 170–phenylalanine 181. Residues arginine 143–phenylalanine 181 form a disordered region.

Has been detected in a cytochrome bc1-aa3 supercomplex; its deletion however leaves complex activity unaffected.

This is an uncharacterized protein from Corynebacterium glutamicum (strain ATCC 13032 / DSM 20300 / JCM 1318 / BCRC 11384 / CCUG 27702 / LMG 3730 / NBRC 12168 / NCIMB 10025 / NRRL B-2784 / 534).